We begin with the raw amino-acid sequence, 172 residues long: MRILPARHRQLFKEPFGTLFHSFEEVLKFLPGKTVFSVGDVVTANLLRAGRPPEVAIVDGHTMRQPYPGVNIPEYHQLLVKNPAGGLTEDLIDATQIAASRQGTVIQVEGEEDLAVVPLAMHAPLGTVILYGQPGEGVVLLSITPAMKKRAEELFTCFEEVSTPTAREVFNI.

GTP contacts are provided by aspartate 40, valine 41, valine 42, aspartate 59, and glutamate 112.

The protein belongs to the GTP-dependent DPCK family.

The catalysed reaction is 3'-dephospho-CoA + GTP = GDP + CoA + H(+). It functions in the pathway cofactor biosynthesis; coenzyme A biosynthesis. Functionally, catalyzes the GTP-dependent phosphorylation of the 3'-hydroxyl group of dephosphocoenzyme A to form coenzyme A (CoA). The sequence is that of GTP-dependent dephospho-CoA kinase from Methanospirillum hungatei JF-1 (strain ATCC 27890 / DSM 864 / NBRC 100397 / JF-1).